The chain runs to 306 residues: NAD-dependent protein deacylase (306 aa).

A Deacetylase sirtuin-type domain is found at 1-305 (MNKQLKEFQE…PIALKPLIGD (305 aa)). 23–42 (GAGLSASSGLPTFRGSQGLW) provides a ligand contact to NAD(+). 2 residues coordinate substrate: Y67 and R70. An NAD(+)-binding site is contributed by 103–106 (QNVD). Catalysis depends on H123, which acts as the Proton acceptor. Zn(2+) contacts are provided by C131, C136, C200, and C203. Residues 243-245 (GTS), 269-271 (NTD), and A291 each bind NAD(+).

This sequence belongs to the sirtuin family. Class III subfamily. Zn(2+) is required as a cofactor.

The protein resides in the mitochondrion. The enzyme catalyses N(6)-malonyl-L-lysyl-[protein] + NAD(+) + H2O = 2''-O-malonyl-ADP-D-ribose + nicotinamide + L-lysyl-[protein]. The catalysed reaction is N(6)-succinyl-L-lysyl-[protein] + NAD(+) + H2O = 2''-O-succinyl-ADP-D-ribose + nicotinamide + L-lysyl-[protein]. It catalyses the reaction N(6)-glutaryl-L-lysyl-[protein] + NAD(+) + H2O = 2''-O-glutaryl-ADP-D-ribose + nicotinamide + L-lysyl-[protein]. In terms of biological role, NAD-dependent lysine demalonylase, desuccinylase and deglutarylase that specifically removes malonyl, succinyl and glutaryl groups on target proteins. Has weak NAD-dependent protein deacetylase activity; however this activity may not be physiologically relevant in vivo. This Candida albicans (strain SC5314 / ATCC MYA-2876) (Yeast) protein is NAD-dependent protein deacylase.